The sequence spans 244 residues: 5-oxoprolinase subunit A (244 aa).

The protein belongs to the LamB/PxpA family. Forms a complex composed of PxpA, PxpB and PxpC.

It catalyses the reaction 5-oxo-L-proline + ATP + 2 H2O = L-glutamate + ADP + phosphate + H(+). Catalyzes the cleavage of 5-oxoproline to form L-glutamate coupled to the hydrolysis of ATP to ADP and inorganic phosphate. The chain is 5-oxoprolinase subunit A from Escherichia coli (strain SMS-3-5 / SECEC).